The chain runs to 268 residues: Tropinone reductase homolog At2g29150 (268 aa).

22 to 46 is an NADP(+) binding site; the sequence is LVTGGSKGLGEAVVEELAMLGARVH. S155 contributes to the substrate binding site. The active-site Proton acceptor is the Y167.

This sequence belongs to the short-chain dehydrogenases/reductases (SDR) family. SDR65C subfamily.

Its function is as follows. Enantiospecific reductase active on cyclic monoterpenes and small flexible lipophilic carbonyls. No activity with tropinone, nitrogen-containing tropinone analogs, tropine or pseudotropine as substrate. The protein is Tropinone reductase homolog At2g29150 of Arabidopsis thaliana (Mouse-ear cress).